The chain runs to 162 residues: Ribosome maturation factor RimP (162 aa).

The protein belongs to the RimP family.

The protein localises to the cytoplasm. Functionally, required for maturation of 30S ribosomal subunits. In Ralstonia pickettii (strain 12J), this protein is Ribosome maturation factor RimP.